The chain runs to 1436 residues: Probable ATP-dependent RNA helicase spindle-E (1436 aa).

The Helicase ATP-binding domain occupies 124–291 (LAAINANPVV…FTTTNSIPPV (168 aa)). 137-144 (GETGCGKT) is an ATP binding site. The DEAH box signature appears at 237–240 (DEVH). In terms of domain architecture, Helicase C-terminal spans 337 to 524 (KIIMVIDNME…NSVLRAKELE (188 aa)). Residues 940–1003 (ACDISKGMMV…RFMSEELIQQ (64 aa)) form the Tudor domain.

The protein belongs to the DEAD box helicase family. DEAH subfamily.

Its subcellular location is the cytoplasm. It catalyses the reaction ATP + H2O = ADP + phosphate + H(+). Functionally, probable ATP-binding RNA helicase which plays a central role during spermatogenesis and oogenesis by repressing transposable elements and preventing their mobilization, which is essential for the germline integrity. Acts via the piRNA metabolic process, which mediates the repression of transposable elements during meiosis by forming complexes composed of piRNAs and Piwi and govern the methylation and subsequent repression of transposons. Involved in the repression of LTR retrotransposon copia. Also involved in telomere regulation by repressing specialized telomeric retroelements HeT-A, TAHRE, and TART; Drosophila telomeres being maintained by transposition of specialized telomeric retroelements. Involved in telomeric trans-silencing, a repression mechanism by which a transposon or a transgene inserted in subtelomeric heterochromatin has the capacity to repress in trans in the female germline, a homologous transposon, or transgene located in euchromatin. Involved in the repression of testis-expressed Stellate genes by the homologous Su(Ste) repeats. Required for anteroposterior and dorsoventral axis formation during oogenesis. This chain is Probable ATP-dependent RNA helicase spindle-E (spn-E), found in Drosophila yakuba (Fruit fly).